We begin with the raw amino-acid sequence, 371 residues long: o-succinylbenzoate synthase (371 aa).

Residue K164 is the Proton donor of the active site. Residues D189, E214, and D239 each coordinate Mg(2+). Catalysis depends on K263, which acts as the Proton acceptor.

This sequence belongs to the mandelate racemase/muconate lactonizing enzyme family. MenC type 2 subfamily. It depends on a divalent metal cation as a cofactor.

It catalyses the reaction (1R,6R)-6-hydroxy-2-succinyl-cyclohexa-2,4-diene-1-carboxylate = 2-succinylbenzoate + H2O. It functions in the pathway quinol/quinone metabolism; 1,4-dihydroxy-2-naphthoate biosynthesis; 1,4-dihydroxy-2-naphthoate from chorismate: step 4/7. It participates in quinol/quinone metabolism; menaquinone biosynthesis. Functionally, converts 2-succinyl-6-hydroxy-2,4-cyclohexadiene-1-carboxylate (SHCHC) to 2-succinylbenzoate (OSB). Does not show detectable N-acylamino acid racemase (NAAAR) activity with N-acetyl-S-methionine as substrate. This chain is o-succinylbenzoate synthase, found in Bacillus subtilis (strain 168).